A 459-amino-acid polypeptide reads, in one-letter code: Vacuolar amino acid transporter 5 (459 aa).

8 consecutive transmembrane segments (helical) span residues Gly-8–Phe-28, Leu-33–Leu-53, Val-82–Ile-102, Phe-131–Phe-151, Ala-161–Val-181, Leu-206–Ile-226, Ile-240–Tyr-260, and Ser-278–Leu-298. Polar residues predominate over residues Phe-335 to Glu-351. The tract at residues Phe-335–Leu-354 is disordered. 3 consecutive transmembrane segments (helical) span residues Ile-364 to Ala-384, Val-386 to Phe-406, and Leu-434 to Leu-454.

The protein belongs to the amino acid/polyamine transporter 2 family.

It is found in the vacuole membrane. Its function is as follows. Probable amino acid transporter of unknown specificity. This Saccharomyces cerevisiae (strain ATCC 204508 / S288c) (Baker's yeast) protein is Vacuolar amino acid transporter 5 (AVT5).